A 150-amino-acid polypeptide reads, in one-letter code: Large ribosomal subunit protein bL9 (150 aa).

This sequence belongs to the bacterial ribosomal protein bL9 family.

Its function is as follows. Binds to the 23S rRNA. The protein is Large ribosomal subunit protein bL9 of Paraburkholderia xenovorans (strain LB400).